Consider the following 1577-residue polypeptide: Vacuolar protein sorting/targeting protein PEP1 (1577 aa).

A signal peptide spans 1–21 (MILLHFVYSLWALLLIPLINA). Residues 22–1391 (EEFTPKVTKT…EFKEKYSVSA (1370 aa)) lie on the Lumenal side of the membrane. BNR repeat units lie at residues 58-68 (ISFDDGETWEK) and 101-111 (YITNDQGKSWE). 2 N-linked (GlcNAc...) asparagine glycosylation sites follow: asparagine 121 and asparagine 168. BNR repeat units lie at residues 179–187 (SNDGGKSFS) and 414–423 (ISVDNGLTWT). Asparagine 445 carries N-linked (GlcNAc...) asparagine glycosylation. BNR repeat units follow at residues 485 to 495 (FISRDGGLTWK), 531 to 541 (YYSLDQGKTWT), and 762 to 771 (YISHDGGQTI). A glycan (N-linked (GlcNAc...) asparagine) is linked at asparagine 791. One copy of the BNR 8 repeat lies at 859 to 869 (YLTNDGGETFT). A glycan (N-linked (GlcNAc...) asparagine) is linked at asparagine 1008. BNR repeat units lie at residues 1141-1150 (FFTTDGGETW) and 1183-1192 (YSTDFGKTWK). Asparagine 1301 carries an N-linked (GlcNAc...) asparagine glycan. A helical transmembrane segment spans residues 1392-1412 (GPFAFIFISILLIIFFAAWFV). Topologically, residues 1413-1577 (YDRGIRRNGG…DSTAPSNENQ (165 aa)) are cytoplasmic. Residues 1531-1577 (DDVPTLEEEHTSYTDQPTTTDVPDALPEGNEENIDRPDSTAPSNENQ) form a disordered region.

Belongs to the VPS10-related sortilin family.

It is found in the golgi apparatus. The protein localises to the trans-Golgi network membrane. Its subcellular location is the prevacuolar compartment membrane. Functions as a sorting receptor in the Golgi compartment required for the intracellular sorting and delivery of soluble vacuolar proteins, like carboxypeptidase Y (CPY) and proteinase A. Executes multiple rounds of sorting by cycling between the late Golgi and a prevacuolar endosome-like compartment. Binds the Golgi-modified P2 form of CPY, and this interaction is dependent on the presence of an intact CPY vacuolar protein sorting signal. The polypeptide is Vacuolar protein sorting/targeting protein PEP1 (PEP1) (Saccharomyces cerevisiae (strain JAY291) (Baker's yeast)).